Reading from the N-terminus, the 103-residue chain is Large ribosomal subunit protein bL21 (103 aa).

Belongs to the bacterial ribosomal protein bL21 family. Part of the 50S ribosomal subunit. Contacts protein L20.

In terms of biological role, this protein binds to 23S rRNA in the presence of protein L20. This chain is Large ribosomal subunit protein bL21, found in Vesicomyosocius okutanii subsp. Calyptogena okutanii (strain HA).